Here is a 940-residue protein sequence, read N- to C-terminus: Chordin (940 aa).

Residues 1-19 (MMEGLLWILLSVIIASVHG) form the signal peptide. In terms of domain architecture, VWFC 1 spans 42–118 (SGCSFGGRFY…LPGHCCKTCP (77 aa)). CHRD domains follow at residues 162–277 (TTTD…KHRA), 279–398 (FAET…GRRS), 404–519 (SVLS…LLPY), and 525–652 (RRNE…VPNH). N347 and N430 each carry an N-linked (GlcNAc...) asparagine glycan. VWFC domains are found at residues 689 to 748 (HSCF…PICE), 767 to 836 (EGCY…KECP), and 855 to 919 (RLCK…PECI).

This sequence belongs to the chordin family. In terms of assembly, interacts with twsg1 and/or bmp4. Post-translationally, cleaved by tolloid proteases; cleavage participates in dorsoventral patterning during early development.

The protein localises to the secreted. Its function is as follows. Dorsalizing factor. Key developmental protein that dorsalizes early vertebrate embryonic tissues by binding to ventralizing TGF-beta family bone morphogenetic proteins (BMPs) and sequestering them in latent complexes. This chain is Chordin (chd), found in Danio rerio (Zebrafish).